A 419-amino-acid polypeptide reads, in one-letter code: Tyrosine--tRNA ligase 2 (419 aa).

Residue Tyr-34 participates in L-tyrosine binding. The short motif at 39-48 is the 'HIGH' region element; that stretch reads PTGDSMHIGH. L-tyrosine contacts are provided by Tyr-168 and Gln-172. Residues 230 to 234 carry the 'KMSKS' region motif; the sequence is KFGKS. Lys-233 contacts ATP. Positions 352-418 constitute an S4 RNA-binding domain; sequence KNIVEWLVDL…GKKNYSLVKL (67 aa).

Belongs to the class-I aminoacyl-tRNA synthetase family. TyrS type 1 subfamily. In terms of assembly, homodimer.

The protein localises to the cytoplasm. The catalysed reaction is tRNA(Tyr) + L-tyrosine + ATP = L-tyrosyl-tRNA(Tyr) + AMP + diphosphate + H(+). Catalyzes the attachment of tyrosine to tRNA(Tyr) in a two-step reaction: tyrosine is first activated by ATP to form Tyr-AMP and then transferred to the acceptor end of tRNA(Tyr). The protein is Tyrosine--tRNA ligase 2 of Bacillus cereus (strain ATCC 10987 / NRS 248).